The sequence spans 477 residues: Methylenetetrahydrofolate--tRNA-(uracil-5-)-methyltransferase TrmFO (477 aa).

Residue 14–19 (GGGLAG) participates in FAD binding.

It belongs to the MnmG family. TrmFO subfamily. Requires FAD as cofactor.

The protein resides in the cytoplasm. The catalysed reaction is uridine(54) in tRNA + (6R)-5,10-methylene-5,6,7,8-tetrahydrofolate + NADH + H(+) = 5-methyluridine(54) in tRNA + (6S)-5,6,7,8-tetrahydrofolate + NAD(+). It catalyses the reaction uridine(54) in tRNA + (6R)-5,10-methylene-5,6,7,8-tetrahydrofolate + NADPH + H(+) = 5-methyluridine(54) in tRNA + (6S)-5,6,7,8-tetrahydrofolate + NADP(+). Functionally, catalyzes the folate-dependent formation of 5-methyl-uridine at position 54 (M-5-U54) in all tRNAs. The chain is Methylenetetrahydrofolate--tRNA-(uracil-5-)-methyltransferase TrmFO from Rhizobium johnstonii (strain DSM 114642 / LMG 32736 / 3841) (Rhizobium leguminosarum bv. viciae).